Consider the following 366-residue polypeptide: Transcription initiation factor IIA subunit 1 (366 aa).

Disordered regions lie at residues 56–82, 133–162, and 257–317; these read LSPD…AANA, EVNS…SSGQ, and QLDG…DSAE. The segment covering 146 to 162 has biased composition (low complexity); that stretch reads SAASMMQKQQQAASSGQ. Residues 264–317 show a composition bias toward acidic residues; sequence SSDEDESEESDDNIDNDDDDDLDKDDDEDAEHEDAAEEEPLNSEDDVTDEDSAE. 2 positions are modified to phosphoserine; by TAF1: Ser265 and Ser306.

It belongs to the TFIIA subunit 1 family. As to quaternary structure, belongs to the TFIID complex which is composed of TATA binding protein (Tbp) and a number of TBP-associated factors (Tafs). TFIIA is a heterodimer of a unprocessed large subunit 1 and a small subunit gamma. It was originally believed to be a heterotrimer of an alpha (p30), a beta (p20) and a gamma subunit (p14). Interacts with Tbp. Taf4 interacts with TFIIA-L when TFIIA-L is in complex with Tbp. In terms of processing, the precursor form (48 kDa) is cleaved to give rise to the alpha (30 kDa) and beta (20 kDa) subunits.

The protein resides in the nucleus. TFIIA is a component of the transcription machinery of RNA polymerase II and plays an important role in transcriptional activation. TFIIA in a complex with TBP mediates transcriptional activity. This Drosophila melanogaster (Fruit fly) protein is Transcription initiation factor IIA subunit 1 (TfIIA-L).